We begin with the raw amino-acid sequence, 311 residues long: Pyrimidine-specific ribonucleoside hydrolase RihA (311 aa).

His-240 is an active-site residue.

This sequence belongs to the IUNH family. RihA subfamily.

Functionally, hydrolyzes with equal efficiency cytidine or uridine to ribose and cytosine or uracil, respectively. The sequence is that of Pyrimidine-specific ribonucleoside hydrolase RihA from Escherichia coli O7:K1 (strain IAI39 / ExPEC).